Reading from the N-terminus, the 106-residue chain is Ribonuclease P protein component 4 (106 aa).

Residues Cys-62, Cys-65, Cys-88, and Cys-91 each coordinate Zn(2+).

This sequence belongs to the eukaryotic/archaeal RNase P protein component 4 family. In terms of assembly, consists of a catalytic RNA component and at least 4-5 protein subunits. Zn(2+) is required as a cofactor.

The protein resides in the cytoplasm. The catalysed reaction is Endonucleolytic cleavage of RNA, removing 5'-extranucleotides from tRNA precursor.. In terms of biological role, part of ribonuclease P, a protein complex that generates mature tRNA molecules by cleaving their 5'-ends. The sequence is that of Ribonuclease P protein component 4 from Methanocorpusculum labreanum (strain ATCC 43576 / DSM 4855 / Z).